The sequence spans 193 residues: CASP-like protein 2D1 (193 aa).

A disordered region spans residues 1–24; it reads MRANNNNTREEERSSSSKQQQPQA. Over 1–29 the chain is Cytoplasmic; sequence MRANNNNTREEERSSSSKQQQPQAHMSLK. The helical transmembrane segment at 30 to 50 threads the bilayer; it reads IIDSCLRLSVVPLSVATIWLT. Over 51–73 the chain is Extracellular; that stretch reads VTNHESNPDYGNLDYNSIMGLKY. A helical membrane pass occupies residues 74 to 94; that stretch reads MVGVSAISAIYALLSTISLWV. The Cytoplasmic portion of the chain corresponds to 95–109; it reads TCLVSKAWLFFVPDQ. Residues 110-132 traverse the membrane as a helical segment; that stretch reads VLAYVMTTSVAGATEIVYLLNKG. At 133–151 the chain is on the extracellular side; it reads DKIVTWSEMCSSYPHYCSK. The helical transmembrane segment at 152-172 threads the bilayer; the sequence is LTIALGLHVFVLFFFLFLSVI. Over 173-193 the chain is Cytoplasmic; it reads SAYRAFSPFDPPCDSQTNIDA.

This sequence belongs to the Casparian strip membrane proteins (CASP) family. Homodimer and heterodimers.

It localises to the cell membrane. This is CASP-like protein 2D1 from Arabidopsis lyrata subsp. lyrata (Lyre-leaved rock-cress).